The chain runs to 844 residues: MSDIFNSPQNKASILNALMKSTQGDVEDVLIPKRFRPAKDPLDSPQAAAAFLKEHKYRILRPRAIPTMVEIETDAALPRLAAMVDDGKLKEMVNVPEGTTAFYPKYYPFHRPDHDDVGTFGAPDITLLKQLTFFLLENDFPTGPETLRQVREAIATLQYGSGSYSGQLNRLLAMKGVATGRNPNKTPLAVGYTNEQMARLMEQTLPINPPKNEDPDLRWAPSWLIQYTGDASTDKSYLPHVTAKSSAGLPYIGKTKGDTTAEALVLADSFIRDLGKAATSADPGAAAKKVLSDFWYLSCGLLFPKGERYTQKDWDLKTRNIWSAPYPTHLLLSMVSSPVMDESKLNITNTQTPSLYGFSPFHGGINRIMTIIREHLDQEQDLVMIYADNIYILQDNTWYSIDLEKGEANCTPQHMQAMMYYRLTREWTNEDGSPRYNPTWATFAMYVGPSMVVDSTCLLMNLQLKTTGQGSGNAFTFLNNHLMSTIVVAEWHKAGRPNPMSKEFMDLEAKTGINFKIERELKDLRSIIMEAVDTAPLDGYLADGSDLPPRVPGKAVELDLLGWSAVYSRQLEMFVPVLENERLIASVAYPKGLENKSLARKPGAEIAYQIVRYEAIRLIGGWNNPLIETAAKHMSLDKRKRLEVKGIDVTGFLDDWNTMSEFGGDLEGISLTAPLTNQTLLDINTPETEFDVKDRPPTPRSPGKTLAEVTAAITSGTYKDPKSAVWRLLDQRTKLRVSTLRDHAHALKPAASTSDFWGDATEELAEQQQLLMKANNLLKSSLTEAREALETVQSDKIISGKTSPEKNPGTAANPVVAYGEFSEKIPLTPTQKKNAKRREKQRRN.

248 to 255 (GLPYIGKT) contacts GTP. In terms of domain architecture, RdRp catalytic spans 384-588 (MIYADNIYIL…ENERLIASVA (205 aa)). Residues 820–844 (EFSEKIPLTPTQKKNAKRREKQRRN) are disordered. The segment covering 833 to 844 (KNAKRREKQRRN) has biased composition (basic residues).

As to quaternary structure, interacts with VP3 in the cytoplasm. Exists in multiple phosphorylated forms.

Its subcellular location is the virion. It catalyses the reaction RNA(n) + a ribonucleoside 5'-triphosphate = RNA(n+1) + diphosphate. Its function is as follows. RNA-dependent RNA polymerase which is found both free and covalently attached to the genomic RNA. May also contain guanylyl and methyl transferase activities. This chain is RNA-directed RNA polymerase (VP1), found in Infectious pancreatic necrosis virus (strain Sp) (IPNV).